Reading from the N-terminus, the 119-residue chain is Large ribosomal subunit protein bL19 (119 aa).

This sequence belongs to the bacterial ribosomal protein bL19 family.

Its function is as follows. This protein is located at the 30S-50S ribosomal subunit interface and may play a role in the structure and function of the aminoacyl-tRNA binding site. This chain is Large ribosomal subunit protein bL19, found in Limosilactobacillus fermentum (strain NBRC 3956 / LMG 18251) (Lactobacillus fermentum).